We begin with the raw amino-acid sequence, 187 residues long: Peptidyl-tRNA hydrolase (187 aa).

A tRNA-binding site is contributed by Tyr-15. The active-site Proton acceptor is His-20. TRNA contacts are provided by Phe-65, Asn-67, and Asn-113.

The protein belongs to the PTH family. As to quaternary structure, monomer.

The protein localises to the cytoplasm. It carries out the reaction an N-acyl-L-alpha-aminoacyl-tRNA + H2O = an N-acyl-L-amino acid + a tRNA + H(+). Hydrolyzes ribosome-free peptidyl-tRNAs (with 1 or more amino acids incorporated), which drop off the ribosome during protein synthesis, or as a result of ribosome stalling. In terms of biological role, catalyzes the release of premature peptidyl moieties from peptidyl-tRNA molecules trapped in stalled 50S ribosomal subunits, and thus maintains levels of free tRNAs and 50S ribosomes. In Elusimicrobium minutum (strain Pei191), this protein is Peptidyl-tRNA hydrolase.